Reading from the N-terminus, the 805-residue chain is Leucine--tRNA ligase (805 aa).

Residues 40 to 51 (PYPSGQGLHVGH) carry the 'HIGH' region motif. The short motif at 577–581 (KMSKS) is the 'KMSKS' region element. Residue K580 participates in ATP binding.

It belongs to the class-I aminoacyl-tRNA synthetase family.

Its subcellular location is the cytoplasm. It carries out the reaction tRNA(Leu) + L-leucine + ATP = L-leucyl-tRNA(Leu) + AMP + diphosphate. In Pediococcus pentosaceus (strain ATCC 25745 / CCUG 21536 / LMG 10740 / 183-1w), this protein is Leucine--tRNA ligase.